The following is a 447-amino-acid chain: Elongation factor 1-alpha (447 aa).

The tr-type G domain maps to 5–230; it reads KTHINIVVIG…DQINEPKRPS (226 aa). Positions 14-21 are G1; that stretch reads GHVDSGKS. A GTP-binding site is contributed by 14 to 21; sequence GHVDSGKS. Residue Lys55 is modified to N6,N6-dimethyllysine. Residues 70–74 are G2; it reads GITID. N6,N6,N6-trimethyllysine is present on Lys79. Residues 91-94 are G3; sequence DAPG. Residues 91–95 and 153–156 contribute to the GTP site; these read DAPGH and NKMD. Positions 153-156 are G4; sequence NKMD. An N6,N6,N6-trimethyllysine modification is found at Lys187. The G5 stretch occupies residues 194–196; it reads SGF. Residue Lys261 is modified to N6-methyllysine. Glu289 bears the 5-glutamyl glycerylphosphorylethanolamine mark. Lys306 carries the N6,N6,N6-trimethyllysine modification. 5-glutamyl glycerylphosphorylethanolamine is present on Glu362. Lys396 carries the post-translational modification N6,N6,N6-trimethyllysine.

Belongs to the TRAFAC class translation factor GTPase superfamily. Classic translation factor GTPase family. EF-Tu/EF-1A subfamily.

Its subcellular location is the cytoplasm. This protein promotes the GTP-dependent binding of aminoacyl-tRNA to the A-site of ribosomes during protein biosynthesis. The protein is Elongation factor 1-alpha (REFA1) of Oryza sativa subsp. japonica (Rice).